The chain runs to 479 residues: FAD-dependent monooxygenase ausM (479 aa).

3 residues coordinate FAD: glutamate 40, glycine 54, and arginine 113. Tyrosine 224 is an active-site residue. The N-linked (GlcNAc...) asparagine glycan is linked to asparagine 289. Aspartate 316 and alanine 329 together coordinate FAD. The helical transmembrane segment at 449 to 469 (TLPWLVISLPVLASMLCYLVY) threads the bilayer.

This sequence belongs to the paxM FAD-dependent monooxygenase family. It depends on FAD as a cofactor.

The protein resides in the membrane. It functions in the pathway secondary metabolite biosynthesis; terpenoid biosynthesis. Its function is as follows. FAD-dependent monooxygenase; part of the gene cluster B that mediates the biosynthesis of austinol and dehydroaustinol, two fungal meroterpenoids. The first step of the pathway is the synthesis of 3,5-dimethylorsellinic acid by the polyketide synthase ausA. 3,5-dimethylorsellinic acid is then prenylated by the polyprenyl transferase ausN. Further epoxidation by the FAD-dependent monooxygenase ausM and cyclization by the probable terpene cyclase ausL lead to the formation of protoaustinoid A. Protoaustinoid A is then oxidized to spiro-lactone preaustinoid A3 by the combined action of the FAD-binding monooxygenases ausB and ausC, and the dioxygenase ausE. Acid-catalyzed keto-rearrangement and ring contraction of the tetraketide portion of preaustinoid A3 by ausJ lead to the formation of preaustinoid A4. The aldo-keto reductase ausK, with the help of ausH, is involved in the next step by transforming preaustinoid A4 into isoaustinone which is in turn hydroxylated by the P450 monooxygenase ausI to form austinolide. Finally, the cytochrome P450 monooxygenase ausG modifies austinolide to austinol. Austinol can be further modified to dehydroaustinol which forms a diffusible complex with diorcinol that initiates conidiation. Due to genetic rearrangements of the clusters and the subsequent loss of some enzymes, the end products of the Emericella nidulans austinoid biosynthesis clusters are austinol and dehydroaustinol, even if additional enzymes, such as the O-acetyltransferase ausQ and the cytochrome P450 monooxygenase ausR are still functional. This chain is FAD-dependent monooxygenase ausM, found in Emericella nidulans (strain FGSC A4 / ATCC 38163 / CBS 112.46 / NRRL 194 / M139) (Aspergillus nidulans).